The chain runs to 168 residues: Fusaric acid resistance protein FusE (168 aa).

Its function is as follows. Involved in the resistance (detoxification) of the fungal toxin fusaric acid. The chain is Fusaric acid resistance protein FusE (fusE) from Burkholderia cepacia (Pseudomonas cepacia).